Reading from the N-terminus, the 316-residue chain is Ribosomal protein L11 methyltransferase (316 aa).

S-adenosyl-L-methionine-binding residues include Thr-157, Gly-178, Asp-200, and Asn-243.

It belongs to the methyltransferase superfamily. PrmA family.

It is found in the cytoplasm. It catalyses the reaction L-lysyl-[protein] + 3 S-adenosyl-L-methionine = N(6),N(6),N(6)-trimethyl-L-lysyl-[protein] + 3 S-adenosyl-L-homocysteine + 3 H(+). Methylates ribosomal protein L11. This chain is Ribosomal protein L11 methyltransferase, found in Streptococcus pneumoniae (strain P1031).